Reading from the N-terminus, the 79-residue chain is ATP synthase subunit c (79 aa).

2 helical membrane passes run 11–31 (IAVA…IGIL) and 53–73 (FFVV…LGLY).

It belongs to the ATPase C chain family. F-type ATPases have 2 components, F(1) - the catalytic core - and F(0) - the membrane proton channel. F(1) has five subunits: alpha(3), beta(3), gamma(1), delta(1), epsilon(1). F(0) has three main subunits: a(1), b(2) and c(10-14). The alpha and beta chains form an alternating ring which encloses part of the gamma chain. F(1) is attached to F(0) by a central stalk formed by the gamma and epsilon chains, while a peripheral stalk is formed by the delta and b chains.

The protein resides in the cell membrane. In terms of biological role, f(1)F(0) ATP synthase produces ATP from ADP in the presence of a proton or sodium gradient. F-type ATPases consist of two structural domains, F(1) containing the extramembraneous catalytic core and F(0) containing the membrane proton channel, linked together by a central stalk and a peripheral stalk. During catalysis, ATP synthesis in the catalytic domain of F(1) is coupled via a rotary mechanism of the central stalk subunits to proton translocation. Its function is as follows. Key component of the F(0) channel; it plays a direct role in translocation across the membrane. A homomeric c-ring of between 10-14 subunits forms the central stalk rotor element with the F(1) delta and epsilon subunits. The polypeptide is ATP synthase subunit c (Buchnera aphidicola subsp. Schizaphis graminum (strain Sg)).